The primary structure comprises 365 residues: tRNA 2-selenouridine synthase (365 aa).

The Rhodanese domain occupies 15 to 138; that stretch reads FVNDHPIMDA…MRQFLIETID (124 aa). The active-site S-selanylcysteine intermediate is Cys98.

Belongs to the SelU family. In terms of assembly, monomer.

The enzyme catalyses 5-methylaminomethyl-2-thiouridine(34) in tRNA + selenophosphate + (2E)-geranyl diphosphate + H2O + H(+) = 5-methylaminomethyl-2-selenouridine(34) in tRNA + (2E)-thiogeraniol + phosphate + diphosphate. The catalysed reaction is 5-methylaminomethyl-2-thiouridine(34) in tRNA + (2E)-geranyl diphosphate = 5-methylaminomethyl-S-(2E)-geranyl-thiouridine(34) in tRNA + diphosphate. It carries out the reaction 5-methylaminomethyl-S-(2E)-geranyl-thiouridine(34) in tRNA + selenophosphate + H(+) = 5-methylaminomethyl-2-(Se-phospho)selenouridine(34) in tRNA + (2E)-thiogeraniol. It catalyses the reaction 5-methylaminomethyl-2-(Se-phospho)selenouridine(34) in tRNA + H2O = 5-methylaminomethyl-2-selenouridine(34) in tRNA + phosphate. Involved in the post-transcriptional modification of the uridine at the wobble position (U34) of tRNA(Lys), tRNA(Glu) and tRNA(Gln). Catalyzes the conversion of 2-thiouridine (S2U-RNA) to 2-selenouridine (Se2U-RNA). Acts in a two-step process involving geranylation of 2-thiouridine (S2U) to S-geranyl-2-thiouridine (geS2U) and subsequent selenation of the latter derivative to 2-selenouridine (Se2U) in the tRNA chain. In Shewanella halifaxensis (strain HAW-EB4), this protein is tRNA 2-selenouridine synthase.